The sequence spans 896 residues: MFENILTKIFGSKNERDLKRLQPLVAHIGSLESELETLSEEQLAGKTVEFRQRLAEGASLDSLLPEAFAVVREAGKRVLGMRHFDVQLIGGMVLHKGKIAEMKTGEGKTLVATLAAYLNALPAKGVHVITVNDYLASRDAEWMGRIHRYLGLTVGCIVHGLDDRQRKEAYACDITYGTNNEFGFDYLRDNMKFSLDDYVQRPLSYAIVDEVDSILIDEARTPLIISGPSESSSELYYSVNRIIPMLEKGETIESRDGRVGQTVREYTGDFTIDEKAKTASLTEDGVAKVERLLGVENLYDPGNIELLHHVNQALKAHALFKRDVDYVVKDGEVMIVDEFTGRLMPGRRWSDGLHQAVEAKEGVKIESENQTLATITFQNYFRMYDKLAGMTGTADTEATEFNQIYSLDVMVIPTNRPLARKDEGDVIYKTNREKFLAVVEDIIERHAGGQPILVGTISIENSEVLSSMLRKRGVPHNVLNAKHHEREAEIVAQAGRKGAVTIATNMAGRGTDIILGGNPDLLAQRESAGAENPEAALAQALVKYQEVCAQEKQDVLAAGGLYILGTERHESRRIDNQLRGRAGRQGDPGASRFYLSLEDDLLRIFGSHRVAYIMDRLKIPEGEPIEHRFISKAIANAQKKVEAHNFDIRKHLIEYDDVMNTQRNVIYAQRREVLGGEQLPETFAAIIDEMVEDIVATFCPEKSAPEDWGWASLNEDFFSQFNMPPAPLEVPASDLTPTVMLEHLKQQVDARLQEREAEFTPPVMLHLMKVLLLQTIDAQWKDHLLSIDHLKEGIGLRGYAQRNPKEEYKREAYELFLQMMGRIRQEVVQKLFRIQLAKEQDVERMEQRQRRHRISLNRAGGEAEAAKPVVRDEKKVGRNDPCPCGSGLKYKKCCGQ.

Residues Q87, 105-109 (GEGKT), and D512 each bind ATP. Residues 858 to 886 (RAGGEAEAAKPVVRDEKKVGRNDPCPCGS) are disordered. Residues 869-878 (VVRDEKKVGR) are compositionally biased toward basic and acidic residues. Zn(2+)-binding residues include C882, C884, C893, and C894.

It belongs to the SecA family. In terms of assembly, monomer and homodimer. Part of the essential Sec protein translocation apparatus which comprises SecA, SecYEG and auxiliary proteins SecDF-YajC and YidC. The cofactor is Zn(2+).

It localises to the cell inner membrane. Its subcellular location is the cytoplasm. The enzyme catalyses ATP + H2O + cellular proteinSide 1 = ADP + phosphate + cellular proteinSide 2.. Functionally, part of the Sec protein translocase complex. Interacts with the SecYEG preprotein conducting channel. Has a central role in coupling the hydrolysis of ATP to the transfer of proteins into and across the cell membrane, serving as an ATP-driven molecular motor driving the stepwise translocation of polypeptide chains across the membrane. This Syntrophotalea carbinolica (strain DSM 2380 / NBRC 103641 / GraBd1) (Pelobacter carbinolicus) protein is Protein translocase subunit SecA.